The primary structure comprises 426 residues: Serine hydroxymethyltransferase (426 aa).

(6S)-5,6,7,8-tetrahydrofolate contacts are provided by residues Leu118 and Gly122–Leu124. Lys227 is modified (N6-(pyridoxal phosphate)lysine). A disordered region spans residues Asn342–Gly368.

Belongs to the SHMT family. As to quaternary structure, homodimer. Requires pyridoxal 5'-phosphate as cofactor.

It is found in the cytoplasm. It carries out the reaction (6R)-5,10-methylene-5,6,7,8-tetrahydrofolate + glycine + H2O = (6S)-5,6,7,8-tetrahydrofolate + L-serine. It functions in the pathway one-carbon metabolism; tetrahydrofolate interconversion. The protein operates within amino-acid biosynthesis; glycine biosynthesis; glycine from L-serine: step 1/1. Catalyzes the reversible interconversion of serine and glycine with tetrahydrofolate (THF) serving as the one-carbon carrier. This reaction serves as the major source of one-carbon groups required for the biosynthesis of purines, thymidylate, methionine, and other important biomolecules. Also exhibits THF-independent aldolase activity toward beta-hydroxyamino acids, producing glycine and aldehydes, via a retro-aldol mechanism. The sequence is that of Serine hydroxymethyltransferase from Thermomicrobium roseum (strain ATCC 27502 / DSM 5159 / P-2).